The following is a 161-amino-acid chain: DNA-binding protein inhibitor ID-4 (161 aa).

The region spanning 52-104 (AAEAAADEPALCLQCDMNDCYSRLRRLVPTIPPNKKVSKVEILQHVIDYILDL) is the bHLH domain.

In terms of assembly, heterodimer with other HLH proteins.

It localises to the nucleus. Its function is as follows. Transcriptional regulator (lacking a basic DNA binding domain) which negatively regulates the basic helix-loop-helix (bHLH) transcription factors by forming heterodimers and inhibiting their DNA binding and transcriptional activity. Implicated in regulating a variety of cellular processes, including cellular growth, senescence, differentiation, apoptosis, angiogenesis, and neoplastic transformation. The polypeptide is DNA-binding protein inhibitor ID-4 (Id4) (Mus musculus (Mouse)).